Reading from the N-terminus, the 343-residue chain is F17g-G fimbrial adhesin (343 aa).

The N-terminal stretch at 1–22 is a signal peptide; that stretch reads MTNFYKVCLAVFILVCCNISHA. The interval 23 to 199 is receptor-binding lectin domain; it reads AVSFIGSTEN…LNPFTLNDTV (177 aa). A carbohydrate contacts are provided by residues 65 to 66, 110 to 111, and 138 to 141; these read AN, DT, and STQG. Cys75 and Cys132 are disulfide-bonded. Positions 200–343 are fimbrillin-binding domain; that stretch reads TSCRLLTPSA…GISTFTFSYQ (144 aa). Positions 287–307 are disordered; sequence LKFGPDSPVKGNENQWQLSTG. Residues 298–307 show a composition bias toward polar residues; it reads NENQWQLSTG.

The protein belongs to the fimbrial protein family.

The protein localises to the fimbrium. Its function is as follows. Essential fimbrial adhesion factor that mediates binding to N-acetylglucosamine-containing receptors in the host intestinal microvilli, leading to colonization of the intestinal tissue, and diarrhea or septicemia. Also confers adhesiveness to laminin and basement membranes. May be involved in the initiation of polymerization of fimbrillin monomers during fimbrial filament biogenesis. The sequence is that of F17g-G fimbrial adhesin (f17gG) from Escherichia coli.